Reading from the N-terminus, the 466-residue chain is Clusterin-like protein 1 (466 aa).

Residues 1-20 (MKPPLLVFIVCLLWLKDSHC) form the signal peptide. Positions 57 to 111 (KQMKIMMERKEKEHTNLMSTLKKCREEKQEALKLLNEVQEHLEEEERLCRESLAD) form a coiled coil. 5 disulfide bridges follow: Cys-105–Cys-333, Cys-116–Cys-325, Cys-119–Cys-322, Cys-124–Cys-315, and Cys-131–Cys-305. Asn-196, Asn-257, Asn-311, Asn-351, Asn-412, and Asn-431 each carry an N-linked (GlcNAc...) asparagine glycan.

The protein belongs to the clusterin family.

The protein resides in the secreted. This is Clusterin-like protein 1 (CLUL1) from Homo sapiens (Human).